The primary structure comprises 146 residues: uncharacterized protein (146 aa).

A helical transmembrane segment spans residues 7 to 27 (FVLSITIVLVILIIIAFIWYN).

It belongs to the asfivirus E146L family.

The protein resides in the host membrane. The protein localises to the virion. This is an uncharacterized protein from African swine fever virus (strain Badajoz 1971 Vero-adapted) (Ba71V).